Consider the following 495-residue polypeptide: Trimethylamine methyltransferase MttB (495 aa).

Residue Pyl334 is a non-standard amino acid, pyrrolysine.

This sequence belongs to the trimethylamine methyltransferase family. In terms of assembly, can form a complex with MttC.

It carries out the reaction Co(I)-[trimethylamine-specific corrinoid protein] + trimethylamine + H(+) = methyl-Co(III)-[trimethylamine-specific corrinoid protein] + dimethylamine. The protein operates within one-carbon metabolism; methanogenesis from trimethylamine. Functionally, catalyzes the transfer of a methyl group from trimethylamine to the corrinoid cofactor of MttC. The polypeptide is Trimethylamine methyltransferase MttB (Methanosarcina barkeri).